The sequence spans 720 residues: Methionine--tRNA ligase (720 aa).

The 'HIGH' region motif lies at 27 to 37; the sequence is PYANGQIHIGH. Zn(2+) contacts are provided by Cys-158, Cys-161, Cys-171, and Cys-174. The 'KMSKS' region motif lies at 348 to 352; the sequence is KMSKS. Position 351 (Lys-351) interacts with ATP. Residues 614-720 form the tRNA-binding domain; it reads DFAKIDLRIA…SGAKPGMRVK (107 aa).

The protein belongs to the class-I aminoacyl-tRNA synthetase family. MetG type 1 subfamily. As to quaternary structure, homodimer. The cofactor is Zn(2+).

The protein localises to the cytoplasm. It carries out the reaction tRNA(Met) + L-methionine + ATP = L-methionyl-tRNA(Met) + AMP + diphosphate. Functionally, is required not only for elongation of protein synthesis but also for the initiation of all mRNA translation through initiator tRNA(fMet) aminoacylation. The polypeptide is Methionine--tRNA ligase (Burkholderia lata (strain ATCC 17760 / DSM 23089 / LMG 22485 / NCIMB 9086 / R18194 / 383)).